We begin with the raw amino-acid sequence, 388 residues long: Ribonuclease D (388 aa).

The region spanning 7 to 173 is the 3'-5' exonuclease domain; it reads ITDSKTLAQF…QIFPKMLEEL (167 aa). One can recognise an HRDC domain in the interval 212–293; sequence KADVLGRLKA…ASHAPLAKEE (82 aa).

It belongs to the RNase D family. A divalent metal cation is required as a cofactor.

The protein resides in the cytoplasm. The catalysed reaction is Exonucleolytic cleavage that removes extra residues from the 3'-terminus of tRNA to produce 5'-mononucleotides.. Exonuclease involved in the 3' processing of various precursor tRNAs. Initiates hydrolysis at the 3'-terminus of an RNA molecule and releases 5'-mononucleotides. In Sphingobium indicum (strain DSM 16413 / CCM 7287 / MTCC 6362 / UT26 / NBRC 101211 / UT26S) (Sphingobium japonicum), this protein is Ribonuclease D.